The sequence spans 451 residues: UPF0210 protein LMOf2365_0563 (451 aa).

The protein belongs to the UPF0210 family. In terms of assembly, homodimer.

This Listeria monocytogenes serotype 4b (strain F2365) protein is UPF0210 protein LMOf2365_0563.